We begin with the raw amino-acid sequence, 264 residues long: ATP synthase subunit a (264 aa).

7 helical membrane-spanning segments follow: residues 30 to 50 (WNIDSLLFSVGLGMLFLWLFY), 90 to 110 (IAPLALTIFVWIFMMNFMDMI), 111 to 131 (PVDWLPSLALLAGVPYLKVVP), 134 to 154 (DVNITFSLALGVFVLIIYYSI), 177 to 197 (IPVNLLLETVTLVAKPISLAL), 208 to 228 (LIFILIALMYGSNVALSALGV), and 235 to 255 (LIFHILVITLQAFIFMMLTIV).

The protein belongs to the ATPase A chain family. In terms of assembly, F-type ATPases have 2 components, CF(1) - the catalytic core - and CF(0) - the membrane proton channel. CF(1) has five subunits: alpha(3), beta(3), gamma(1), delta(1), epsilon(1). CF(0) has three main subunits: a(1), b(2) and c(9-12). The alpha and beta chains form an alternating ring which encloses part of the gamma chain. CF(1) is attached to CF(0) by a central stalk formed by the gamma and epsilon chains, while a peripheral stalk is formed by the delta and b chains.

It localises to the cell inner membrane. Functionally, key component of the proton channel; it plays a direct role in the translocation of protons across the membrane. In Shewanella frigidimarina (strain NCIMB 400), this protein is ATP synthase subunit a.